The primary structure comprises 364 residues: Methylthioribose-1-phosphate isomerase (364 aa).

Catalysis depends on aspartate 254, which acts as the Proton donor.

The protein belongs to the eIF-2B alpha/beta/delta subunits family. MtnA subfamily.

The protein resides in the cytoplasm. It is found in the nucleus. It carries out the reaction 5-(methylsulfanyl)-alpha-D-ribose 1-phosphate = 5-(methylsulfanyl)-D-ribulose 1-phosphate. Its pathway is amino-acid biosynthesis; L-methionine biosynthesis via salvage pathway; L-methionine from S-methyl-5-thio-alpha-D-ribose 1-phosphate: step 1/6. Functionally, catalyzes the interconversion of methylthioribose-1-phosphate (MTR-1-P) into methylthioribulose-1-phosphate (MTRu-1-P). This is Methylthioribose-1-phosphate isomerase from Drosophila erecta (Fruit fly).